The sequence spans 307 residues: Ribonuclease Z (307 aa).

The Zn(2+) site is built by histidine 63, histidine 65, aspartate 67, histidine 68, histidine 141, aspartate 212, and histidine 270. Residue aspartate 67 is the Proton acceptor of the active site.

It belongs to the RNase Z family. Homodimer. It depends on Zn(2+) as a cofactor.

The enzyme catalyses Endonucleolytic cleavage of RNA, removing extra 3' nucleotides from tRNA precursor, generating 3' termini of tRNAs. A 3'-hydroxy group is left at the tRNA terminus and a 5'-phosphoryl group is left at the trailer molecule.. In terms of biological role, zinc phosphodiesterase, which displays some tRNA 3'-processing endonuclease activity. Probably involved in tRNA maturation, by removing a 3'-trailer from precursor tRNA. This Bacillus cereus (strain G9842) protein is Ribonuclease Z.